Consider the following 1059-residue polypeptide: DNA-directed RNA polymerase subunit beta (1059 aa).

This sequence belongs to the RNA polymerase beta chain family. As to quaternary structure, in plastids the minimal PEP RNA polymerase catalytic core is composed of four subunits: alpha, beta, beta', and beta''. When a (nuclear-encoded) sigma factor is associated with the core the holoenzyme is formed, which can initiate transcription (Potential).

The protein resides in the plastid. It localises to the apicoplast. It carries out the reaction RNA(n) + a ribonucleoside 5'-triphosphate = RNA(n+1) + diphosphate. DNA-dependent RNA polymerase catalyzes the transcription of DNA into RNA using the four ribonucleoside triphosphates as substrates. This chain is DNA-directed RNA polymerase subunit beta (rpoB), found in Eimeria tenella (Coccidian parasite).